A 604-amino-acid chain; its full sequence is MWWILLFLEWFVDWARGTFWYLFGRRSGLCKGTISPQGPLVVDQEKKDKVLQKEYASNEVPDNLDVIVIGSGIGGLTAAAVLARLGKKVLVLEQDKQAGGLCKTFTEKGFEFDCGFYYVGQLHENSFLKIALDLITDGQVHFAEQGSHVETVVIGKGPECKEYTIYNGKKQMEAHLKKQFPNDAKAVEEFFKIMKICSEKVRLLCMLKMVPLWFARFILRTGIADFISPILKYSRTSTSEVVKSLTSNQDLLTVFSKTFCGVPPKNSSCMIDALLLHHSKRGVYYPQGGASEIPYHIIQVLEKHGGKVLVNAPVSRVLVNEQQNAYGVAVKTGDEDIEIKASVVVSNAGVFTTFQKLLTPEIQADPQVQEYLKALKPGKGFFQVFAGFNATMEELGISSTDMRLYKGNNVDEMMEEYFASDKQDAPDNVPMMYLSFPSAKDPTSSTRFPGQSRMVIHTLVNPKWFEQWENVNEAERGEEYENYKMRFANHLFDWACVRFPQLKEKVALLHAVTPINMHGLGASYCSMSAEHNLERYQPLNIATIRCNTPVKNLYLSGQDIFTAGYSGALHGGFLCASTVMDRCLHIDLLLQQKKLKSKSVKKLE.

The first 17 residues, 1 to 17, serve as a signal peptide directing secretion; the sequence is MWWILLFLEWFVDWARG.

The protein belongs to the carotenoid/retinoid oxidoreductase family. CrtISO subfamily.

The chain is Inactive all-trans-retinol 13,14-reductase (retsatl) from Danio rerio (Zebrafish).